A 45-amino-acid polypeptide reads, in one-letter code: Photosystem II reaction center protein K (45 aa).

Residues 1–8 constitute a propeptide that is removed on maturation; it reads METALLLA. A helical transmembrane segment spans residues 24-44; sequence LPLIPLFFLLLAFVWQASVGF.

It belongs to the PsbK family. PSII is composed of 1 copy each of membrane proteins PsbA, PsbB, PsbC, PsbD, PsbE, PsbF, PsbH, PsbI, PsbJ, PsbK, PsbL, PsbM, PsbT, PsbX, PsbY, PsbZ, Psb30/Ycf12, peripheral proteins PsbO, CyanoQ (PsbQ), PsbU, PsbV and a large number of cofactors. It forms dimeric complexes.

It localises to the cellular thylakoid membrane. In terms of biological role, one of the components of the core complex of photosystem II (PSII). PSII is a light-driven water:plastoquinone oxidoreductase that uses light energy to abstract electrons from H(2)O, generating O(2) and a proton gradient subsequently used for ATP formation. It consists of a core antenna complex that captures photons, and an electron transfer chain that converts photonic excitation into a charge separation. The protein is Photosystem II reaction center protein K of Microcystis aeruginosa (strain NIES-843 / IAM M-2473).